Here is a 105-residue protein sequence, read N- to C-terminus: Large ribosomal subunit protein bL21 (105 aa).

This sequence belongs to the bacterial ribosomal protein bL21 family. In terms of assembly, part of the 50S ribosomal subunit. Contacts protein L20.

This protein binds to 23S rRNA in the presence of protein L20. The polypeptide is Large ribosomal subunit protein bL21 (Parabacteroides distasonis (strain ATCC 8503 / DSM 20701 / CIP 104284 / JCM 5825 / NCTC 11152)).